A 540-amino-acid polypeptide reads, in one-letter code: Glucose-6-phosphate isomerase (540 aa).

Glu350 (proton donor) is an active-site residue. Active-site residues include His381 and Lys503.

Belongs to the GPI family.

The protein resides in the cytoplasm. The enzyme catalyses alpha-D-glucose 6-phosphate = beta-D-fructose 6-phosphate. The protein operates within carbohydrate biosynthesis; gluconeogenesis. Its pathway is carbohydrate degradation; glycolysis; D-glyceraldehyde 3-phosphate and glycerone phosphate from D-glucose: step 2/4. Functionally, catalyzes the reversible isomerization of glucose-6-phosphate to fructose-6-phosphate. The sequence is that of Glucose-6-phosphate isomerase from Burkholderia ambifaria (strain MC40-6).